The sequence spans 380 residues: Transcription factor RF2a (380 aa).

The tract at residues 1-57 (MNREKSPIPGDGGDGLPPQATRRAGPPAAAAAAEYDISRMPDFPTRNPGHRRAHSEI) is disordered. Low complexity predominate over residues 16-33 (LPPQATRRAGPPAAAAAA). The tract at residues 56 to 108 (EILSLPEDLDLCAAGGGDGPSLSDENDEELFSMFLDVEKLNSTCGASSEAEAE) is activation of RTBV promoter. Positions 181–244 (DPKRAKRIWA…SGLTTENSEL (64 aa)) constitute a bZIP domain. The tract at residues 183-204 (KRAKRIWANRQSAARSKERKMR) is basic motif. Positions 209 to 244 (LERKVQTLQTEATTLSAQLALLQRDTSGLTTENSEL) are leucine-zipper. Residues 283-357 (GGMMMNFGGM…AQQLQQAARD (75 aa)) form an interaction with TBP2 region. Positions 326–355 (QAQQQQVLHPQHQQQQPLHPLQAQQLQQAA) are enriched in low complexity. The interval 326–380 (QAQQQQVLHPQHQQQQPLHPLQAQQLQQAARDLKMKSPMGGQSQWGDGKSGSSGN) is disordered.

This sequence belongs to the bZIP family. In terms of assembly, binds DNA as a homodimer or as a heterodimer with RF2b. The heterodimer binds stronger to DNA than the homodimer. Interacts with TBP2. In terms of tissue distribution, expressed at high levels in levels in leaf sheath, moderate levels in leaf blade, but not in roots. Predominantly expressed in vascular tissues.

It localises to the nucleus. Transcription factor probably involved in vascular development and shoot tissue organization. Binds to the DNA sequence 5'-CCGAGTGTGCCCCTGG-3' present in the promoter region Box II of the phloem-specific rice tungro bacilliform virus (RTBV) promoter. May regulate tissue-specific expression of the RTBV promoter and virus replication. This is Transcription factor RF2a (RF2a) from Oryza sativa subsp. japonica (Rice).